Here is a 317-residue protein sequence, read N- to C-terminus: Melanocyte-stimulating hormone receptor (317 aa).

At 1–37 (MPVLGSQRRLLGSLNCTPPATFSLTLAPNRTGPQCLE) the chain is on the extracellular side. Asn-29 carries an N-linked (GlcNAc...) asparagine glycan. Residues 38-63 (VSIPDGLFLSLGLVSLVENVLVVAAI) form a helical membrane-spanning segment. The Cytoplasmic segment spans residues 64–72 (AKNRNLHSP). Residues 73 to 93 (MYYFICCLAVSDLLVSVSNVL) form a helical membrane-spanning segment. Residues 94–118 (ETAVMLLLEAGALAARAAVVQQLDN) are Extracellular-facing. A helical transmembrane segment spans residues 119 to 140 (VIDVLICGSMVSSLCFLGAIAM). The Cytoplasmic segment spans residues 141 to 163 (DRYISIFYALRYHSVVTLPRAWR). A helical membrane pass occupies residues 164-183 (IIAAIWVASILTSLLFITYY). Residues 184 to 191 (NHTVVLLC) are Extracellular-facing. The chain crosses the membrane as a helical span at residues 192–211 (LVGFFIAMLALMAILYVHML). Topologically, residues 212–240 (ARACQHARDIARLQKRQHPIHQGFGLKGA) are cytoplasmic. Residues 241–266 (ATLTILLGVFFLCWGPFFLHLSLIVL) form a helical membrane-spanning segment. The Extracellular segment spans residues 267–279 (CPQHPTCGCIFKN). Residues 280–300 (FNLFLALIICNAIVDPLIYAF) form a helical membrane-spanning segment. Over 301–317 (RSQELRKTLQEVLQCSW) the chain is Cytoplasmic. Residue Cys-315 is the site of S-palmitoyl cysteine attachment.

Belongs to the G-protein coupled receptor 1 family. Interacts with MGRN1, but does not undergo MGRN1-mediated ubiquitination; this interaction competes with GNAS-binding and thus inhibits agonist-induced cAMP production. Interacts with OPN3; the interaction results in a decrease in MC1R-mediated cAMP signaling and ultimately a decrease in melanin production in melanocytes.

The protein localises to the cell membrane. Its function is as follows. Receptor for MSH (alpha, beta and gamma) and ACTH. The activity of this receptor is mediated by G proteins which activate adenylate cyclase. Mediates melanogenesis, the production of eumelanin (black/brown) and phaeomelanin (red/yellow), via regulation of cAMP signaling in melanocytes. In Alces alces alces (European moose), this protein is Melanocyte-stimulating hormone receptor (MC1R).